The following is a 348-amino-acid chain: D-erythrose-4-phosphate dehydrogenase (348 aa).

12–13 is an NAD(+) binding site; the sequence is RI. Residues 154–156, Arg200, 213–214, and Arg236 contribute to the substrate site; these read SCT and TR. Cys155 serves as the catalytic Nucleophile. Asn318 is a binding site for NAD(+).

The protein belongs to the glyceraldehyde-3-phosphate dehydrogenase family. Epd subfamily. In terms of assembly, homotetramer.

The protein resides in the cytoplasm. The catalysed reaction is D-erythrose 4-phosphate + NAD(+) + H2O = 4-phospho-D-erythronate + NADH + 2 H(+). Its pathway is cofactor biosynthesis; pyridoxine 5'-phosphate biosynthesis; pyridoxine 5'-phosphate from D-erythrose 4-phosphate: step 1/5. In terms of biological role, catalyzes the NAD-dependent conversion of D-erythrose 4-phosphate to 4-phosphoerythronate. The polypeptide is D-erythrose-4-phosphate dehydrogenase (Erwinia tasmaniensis (strain DSM 17950 / CFBP 7177 / CIP 109463 / NCPPB 4357 / Et1/99)).